The sequence spans 346 residues: Elongation factor Ts (346 aa).

Positions 80 to 83 are involved in Mg(2+) ion dislocation from EF-Tu; it reads TDFV.

The protein belongs to the EF-Ts family.

Its subcellular location is the cytoplasm. Functionally, associates with the EF-Tu.GDP complex and induces the exchange of GDP to GTP. It remains bound to the aminoacyl-tRNA.EF-Tu.GTP complex up to the GTP hydrolysis stage on the ribosome. This chain is Elongation factor Ts, found in Streptococcus suis (strain 98HAH33).